The sequence spans 433 residues: MHIVVVGLSHRTAPVEVREKLSIPDQSISESLKTLSINSDILEVSILSTCNRLEIYALVKEINIGISSIKEFLTDYSSVNFEDLNPHLFDFRQEEAVLHLMKVSAGLDSLVLGEGQILSQVKKMMRLGQENQSTGPILNRLLSQSVSAGKKVRSETNLGTGAVSISSAAVELAQLKIGQDHGVDGLVSLKSEKVLVVGAGRMSRLLITHLKSKGCNRLTLLNRNIERAVNLAGDFPDLEINCKSLNELDKNISLSSLVFTSTASEKPFIDLARVEKISLNNKLKFIDIGVPRNISNDVKHHAFIESFDVDDLEEVVSRNQEFRQKIAKEAESLVKDERIIFLEWWASLEAVPVINKLRSDLELIRKEELQKALSRMGPDFSARERKVVEALTKGIINKILHTPVTKLRSPQSRDERQASLKIVEKLFSLVDDE.

Residues 49–52, serine 109, 114–116, and glutamine 120 each bind substrate; these read TCNR and EGQ. Residue cysteine 50 is the Nucleophile of the active site. Residue 198-203 participates in NADP(+) binding; the sequence is GAGRMS.

This sequence belongs to the glutamyl-tRNA reductase family. In terms of assembly, homodimer.

It catalyses the reaction (S)-4-amino-5-oxopentanoate + tRNA(Glu) + NADP(+) = L-glutamyl-tRNA(Glu) + NADPH + H(+). The protein operates within porphyrin-containing compound metabolism; protoporphyrin-IX biosynthesis; 5-aminolevulinate from L-glutamyl-tRNA(Glu): step 1/2. It participates in porphyrin-containing compound metabolism; chlorophyll biosynthesis. Functionally, catalyzes the NADPH-dependent reduction of glutamyl-tRNA(Glu) to glutamate 1-semialdehyde (GSA). This Prochlorococcus marinus subsp. pastoris (strain CCMP1986 / NIES-2087 / MED4) protein is Glutamyl-tRNA reductase.